The primary structure comprises 741 residues: Oosporein cluster regulator OpS3 (741 aa).

Residues 16–39 (GRPARGQSTTTRSRNTQQSAPTSQ) form a disordered region. The span at 20-34 (RGQSTTTRSRNTQQS) shows a compositional bias: low complexity. The segment at residues 44-69 (CRRCRQHRIKCSEKPCEPCRANNSKC) is a DNA-binding region (zn(2)-C6 fungal-type). Positions 139–167 (HPNTPNSCPSQSGDIRQQQIPCSQHASPA) are disordered. The stretch at 473–500 (TAGQSMARLSETIRQLETALDELPEQLL) forms a coiled coil. Residues 501 to 528 (TRHGSRTPTNNGQTHRSRPTCSTMPHTN) form a disordered region. Polar residues predominate over residues 506–528 (RTPTNNGQTHRSRPTCSTMPHTN).

Its subcellular location is the nucleus. Functionally, transcription factor involved in regulation of gene cluster that mediates the biosynthesis of oosporein, a metabolite required for fungal virulence that acts by evading host immunity to facilitate fungal multiplication in insects. Binds oosporein cluster genes at a conserved 5'-CGGA-3' motif with the exception of OpS5. The presence of this motif in the OpS3 promoter would suggest the formation of a positive feedback loop for self-activation. This Beauveria bassiana (strain ARSEF 2860) (White muscardine disease fungus) protein is Oosporein cluster regulator OpS3.